The chain runs to 1351 residues: Spike glycoprotein (1351 aa).

A signal peptide spans 1–12 (MFLIIFILPTTL). Topologically, residues 13 to 1295 (AVIGDFNCTN…GTYEMYVKWP (1283 aa)) are extracellular. The region spanning 14-294 (VIGDFNCTNS…SFLSEIQCKT (281 aa)) is the BetaCoV S1-NTD domain. N-linked (GlcNAc...) asparagine; by host glycans are attached at residues asparagine 19, asparagine 29, asparagine 58, asparagine 114, asparagine 132, asparagine 171, asparagine 188, asparagine 192, and asparagine 251. Intrachain disulfides connect cysteine 20-cysteine 156, cysteine 151-cysteine 183, and cysteine 163-cysteine 242. 2 disulfide bridges follow: cysteine 282/cysteine 292 and cysteine 327/cysteine 352. In terms of domain architecture, BetaCoV S1-CTD spans 325-605 (PDCDIDNWLN…GINSGTTCSN (281 aa)). 2 N-linked (GlcNAc...) asparagine; by host glycosylation sites follow: asparagine 335 and asparagine 355. Intrachain disulfides connect cysteine 370–cysteine 423 and cysteine 382–cysteine 603. Asparagine 433, asparagine 454, asparagine 561, asparagine 664, asparagine 684, asparagine 703, asparagine 725, asparagine 771, asparagine 776, and asparagine 793 each carry an N-linked (GlcNAc...) asparagine; by host glycan. Fusion peptide stretches follow at residues 901-922 (SLLE…VEAY) and 920-940 (EAYN…VQSF). Asparagine 924 is a glycosylation site (N-linked (GlcNAc...) asparagine; by host). Cysteine 925 and cysteine 936 form a disulfide bridge. Residues 1001-1051 (QKLIANAFNKALLSIQNGFTATNSALAKIQSVVNANAQALNSLLQQLFNKF) are heptad repeat 1. A coiled-coil region spans residues 1030 to 1074 (QSVVNANAQALNSLLQQLFNKFGAISSSLQEILSRLDNLEAQVQI). Asparagine 1181, asparagine 1211, asparagine 1221, asparagine 1226, asparagine 1240, asparagine 1247, asparagine 1255, and asparagine 1276 each carry an N-linked (GlcNAc...) asparagine; by host glycan. Residues 1245–1284 (APNLTFNSHINATFLDLYYEMNVIQESIKSLNSSFINLKE) are heptad repeat 2. A coiled-coil region spans residues 1257–1285 (TFLDLYYEMNVIQESIKSLNSSFINLKEI). A helical transmembrane segment spans residues 1296 to 1316 (WYIWLLIVILFIIFLMILFFI). The Cytoplasmic segment spans residues 1317-1351 (CCCTGCGSACFSKCHNCCDEYGGHNDFVIKASHDD). The KxHxx signature appears at 1347–1351 (ASHDD).

Belongs to the betacoronaviruses spike protein family. In terms of assembly, homotrimer; each monomer consists of a S1 and a S2 subunit. The resulting peplomers protrude from the virus surface as spikes. In terms of processing, specific enzymatic cleavages in vivo yield mature proteins. The precursor is processed into S1 and S2 by host cell furin or another cellular protease to yield the mature S1 and S2 proteins. Additionally, a second cleavage leads to the release of a fusion peptide after viral attachment to host cell receptor. Post-translationally, the cytoplasmic Cys-rich domain is palmitoylated. Spike glycoprotein is digested within host endosomes.

The protein localises to the virion membrane. It is found in the host endoplasmic reticulum-Golgi intermediate compartment membrane. The protein resides in the host cell membrane. Functionally, attaches the virion to the cell membrane by interacting with host receptor, initiating the infection. Mediates fusion of the virion and cellular membranes by acting as a class I viral fusion protein. Under the current model, the protein has at least three conformational states: pre-fusion native state, pre-hairpin intermediate state, and post-fusion hairpin state. During viral and target cell membrane fusion, the coiled coil regions (heptad repeats) assume a trimer-of-hairpins structure, positioning the fusion peptide in close proximity to the C-terminal region of the ectodomain. The formation of this structure appears to drive apposition and subsequent fusion of viral and target cell membranes. In terms of biological role, acts as a viral fusion peptide which is unmasked following S2 cleavage occurring upon virus endocytosis. This chain is Spike glycoprotein, found in Human coronavirus HKU1 (isolate N2) (HCoV-HKU1).